Here is a 454-residue protein sequence, read N- to C-terminus: tRNA modification GTPase MnmE (454 aa).

(6S)-5-formyl-5,6,7,8-tetrahydrofolate is bound by residues arginine 23, glutamate 80, and lysine 120. Residues 216-377 enclose the TrmE-type G domain; sequence GMKVVIAGRP…LRNHLKQSMG (162 aa). Position 226 (asparagine 226) interacts with K(+). Residues 226-231, 245-251, 270-273, 335-338, and 358-360 each bind GTP; these read NAGKSS, TDIAGTT, DTAG, NKAD, and SAR. Mg(2+) is bound at residue serine 230. Residues threonine 245, isoleucine 247, and threonine 250 each coordinate K(+). Threonine 251 lines the Mg(2+) pocket. Lysine 454 is a (6S)-5-formyl-5,6,7,8-tetrahydrofolate binding site.

It belongs to the TRAFAC class TrmE-Era-EngA-EngB-Septin-like GTPase superfamily. TrmE GTPase family. Homodimer. Heterotetramer of two MnmE and two MnmG subunits. It depends on K(+) as a cofactor.

The protein localises to the cytoplasm. Functionally, exhibits a very high intrinsic GTPase hydrolysis rate. Involved in the addition of a carboxymethylaminomethyl (cmnm) group at the wobble position (U34) of certain tRNAs, forming tRNA-cmnm(5)s(2)U34. This chain is tRNA modification GTPase MnmE, found in Escherichia coli O17:K52:H18 (strain UMN026 / ExPEC).